Consider the following 468-residue polypeptide: V-type proton ATPase subunit H (468 aa).

It belongs to the V-ATPase H subunit family. In terms of assembly, V-ATPase is a heteromultimeric enzyme made up of two complexes: the ATP-hydrolytic V1 complex and the proton translocation V0 complex. The V1 complex consists of three catalytic AB heterodimers that form a heterohexamer, three peripheral stalks each consisting of EG heterodimers, one central rotor including subunits D and F, and the regulatory subunits C and H. The proton translocation complex V0 consists of the proton transport subunit a, a ring of proteolipid subunits c9c'', rotary subunit d, subunits e and f, and the accessory subunits VhaAC45 and ATP6AP2.

Its function is as follows. Subunit of the V1 complex of vacuolar(H+)-ATPase (V-ATPase), a multisubunit enzyme composed of a peripheral complex (V1) that hydrolyzes ATP and a membrane integral complex (V0) that translocates protons. V-ATPase is responsible for acidifying and maintaining the pH of intracellular compartments and in some cell types, is targeted to the plasma membrane, where it is responsible for acidifying the extracellular environment. Subunit H is essential for V-ATPase activity, but not for the assembly of the complex. In Drosophila melanogaster (Fruit fly), this protein is V-type proton ATPase subunit H (VhaSFD).